A 210-amino-acid chain; its full sequence is Ribosomal RNA large subunit methyltransferase E (210 aa).

S-adenosyl-L-methionine is bound by residues Gly-61, Trp-63, Asp-81, Asp-97, and Asp-122. Lys-162 (proton acceptor) is an active-site residue. Residues 187 to 196 (KPEASRKRSP) show a composition bias toward basic and acidic residues. A disordered region spans residues 187-210 (KPEASRKRSPEVYALGQGKRAHMK).

This sequence belongs to the class I-like SAM-binding methyltransferase superfamily. RNA methyltransferase RlmE family.

It is found in the cytoplasm. It catalyses the reaction uridine(2552) in 23S rRNA + S-adenosyl-L-methionine = 2'-O-methyluridine(2552) in 23S rRNA + S-adenosyl-L-homocysteine + H(+). Specifically methylates the uridine in position 2552 of 23S rRNA at the 2'-O position of the ribose in the fully assembled 50S ribosomal subunit. In Stenotrophomonas maltophilia (strain K279a), this protein is Ribosomal RNA large subunit methyltransferase E.